Consider the following 284-residue polypeptide: Tropomyosin (284 aa).

A coiled-coil region spans residues 1–280 (MDAIKKKMQA…SDELDQTFAE (280 aa)).

Belongs to the tropomyosin family. Homodimer.

Its function is as follows. Tropomyosin, in association with the troponin complex, plays a central role in the calcium dependent regulation of muscle contraction. The polypeptide is Tropomyosin (Sinonovacula constricta (Razor clam)).